A 483-amino-acid polypeptide reads, in one-letter code: PAT complex subunit CCDC47 (483 aa).

Positions 1 to 20 are cleaved as a signal peptide; the sequence is MKGFHAFCVILLIFGSVSEA. Over 21–135 the chain is Cytoplasmic; that stretch reads KFDDFEDEED…PAHLQNSWES (115 aa). The interval 44–118 is disordered; that stretch reads DVAEDSVTES…PDTSSSKSKD (75 aa). The span at 60 to 104 shows a compositional bias: acidic residues; that stretch reads TEDDEDETTVELEGQDESQEGDFEDADTQEGDTESEPYDDEEFEG. The span at 105-118 shows a compositional bias: basic and acidic residues; it reads YEDKPDTSSSKSKD. A helical membrane pass occupies residues 136–156; that stretch reads YYLEILMVTGLLAYIMNYIIG. Residues 157-483 are Lumenal-facing; that stretch reads KNKNSRLAQA…KMKQIKVKAM (327 aa). Residue Asn178 is glycosylated (N-linked (GlcNAc...) asparagine). A disordered region spans residues 424-483; sequence QRQEAAQSRREEKKRAEKERIMNEEDPEKQRRLEEAALRREQKKLEKKQMKMKQIKVKAM. Over residues 430–472 the composition is skewed to basic and acidic residues; that stretch reads QSRREEKKRAEKERIMNEEDPEKQRRLEEAALRREQKKLEKKQ. Residues 450–483 adopt a coiled-coil conformation; that stretch reads PEKQRRLEEAALRREQKKLEKKQMKMKQIKVKAM. Residues 473-483 show a composition bias toward basic residues; that stretch reads MKMKQIKVKAM.

It belongs to the CCDC47 family. As to quaternary structure, component of the PAT complex, composed of WDR83OS/Asterix and CCDC47. The PAT complex is part of the multi-pass translocon (MPT) complex, composed of three subcomplexes, the GEL complex (composed of RAB5IF/OPTI and TMCO1), the BOS complex (composed of NCLN/Nicalin, NOMO1 and TMEM147) and the PAT complex (composed of WDR83OS/Asterix and CCDC47). The MPT complex associates with the SEC61 complex. Interacts with VCP, HSPA5, DERL1, DERL2 and SELENOS.

Its subcellular location is the endoplasmic reticulum membrane. The protein localises to the rough endoplasmic reticulum membrane. In terms of biological role, component of the multi-pass translocon (MPT) complex that mediates insertion of multi-pass membrane proteins into the lipid bilayer of membranes. The MPT complex takes over after the SEC61 complex: following membrane insertion of the first few transmembrane segments of proteins by the SEC61 complex, the MPT complex occludes the lateral gate of the SEC61 complex to promote insertion of subsequent transmembrane regions. Within the MPT complex, the PAT subcomplex sequesters any highly polar regions in the transmembrane domains away from the non-polar membrane environment until they can be buried in the interior of the fully assembled protein. Within the PAT subcomplex, CCDC47 occludes the lateral gate of the SEC61 complex. Involved in the regulation of calcium ion homeostasis in the ER. Required for proper protein degradation via the ERAD (ER-associated degradation) pathway. Has an essential role in the maintenance of ER organization during embryogenesis. This is PAT complex subunit CCDC47 (CCDC47) from Bos taurus (Bovine).